The sequence spans 285 residues: Pantothenate synthetase (285 aa).

30-37 (MGNLHDGH) is a binding site for ATP. The active-site Proton donor is histidine 37. (R)-pantoate is bound at residue glutamine 61. Residue glutamine 61 coordinates beta-alanine. 149 to 152 (GEKD) contributes to the ATP binding site. Residue glutamine 155 participates in (R)-pantoate binding. ATP contacts are provided by residues isoleucine 178 and 186 to 189 (FSSR).

The protein belongs to the pantothenate synthetase family. Homodimer.

Its subcellular location is the cytoplasm. The catalysed reaction is (R)-pantoate + beta-alanine + ATP = (R)-pantothenate + AMP + diphosphate + H(+). The protein operates within cofactor biosynthesis; (R)-pantothenate biosynthesis; (R)-pantothenate from (R)-pantoate and beta-alanine: step 1/1. Functionally, catalyzes the condensation of pantoate with beta-alanine in an ATP-dependent reaction via a pantoyl-adenylate intermediate. The polypeptide is Pantothenate synthetase (Buchnera aphidicola subsp. Schizaphis graminum (strain Sg)).